The chain runs to 620 residues: Ferric/cupric reductase transmembrane component 7 (620 aa).

Topologically, residues 1–45 (MIEERDLVLSNGIHCIADIHSELYARLKKESQAATPWVYQKQYGK) are extracellular. A helical membrane pass occupies residues 46-66 (FVTYFVAVIIFLSLIKKLAFM). Over 67–107 (YYDSSEEFLPEKKNSPTTPSVFLARIMTKLVAFNRYICYRK) the chain is Cytoplasmic. The chain crosses the membrane as a helical span at residues 108–128 (FPTLIFSYLGIPTSVGTFLVV). Topologically, residues 129–167 (MATTLYTLLYCFVPHPFYRPCAGFGSPPLSVRAGIMAIS) are extracellular. Residues 161 to 320 (AGIMAISLVP…LAVKGYLRPG (160 aa)) enclose the Ferric oxidoreductase domain. Residues 168–188 (LVPFVFSLSGKINVIGWLVGL) traverse the membrane as a helical segment. At 189–194 (SYEKIN) the chain is on the cytoplasmic side. Residues 195 to 215 (IYHQWASILCLFFSWVHVIPF) traverse the membrane as a helical segment. 2 residues coordinate heme: His-197 and His-211. The Extracellular portion of the chain corresponds to 216–237 (LRQARHEGGYERMHQRWKASDM). Residues 238-258 (WRSGVPPILFLNLLWLSSLPI) form a helical membrane-spanning segment. At 259–265 (ARRHFYE) the chain is on the cytoplasmic side. A helical membrane pass occupies residues 266-286 (IFLQLHWILAVGFYISLFYHV). Positions 271 and 285 each coordinate heme. At 287–292 (YPELNS) the chain is on the extracellular side. The helical transmembrane segment at 293-313 (HMYLVATIVVWFAQLFYRLAV) threads the bilayer. Residues 314 to 620 (KGYLRPGRSF…CYLHSESFGY (307 aa)) are Cytoplasmic-facing. The FAD-binding FR-type domain maps to 321-419 (RSFMASTIAN…DGPYGGIERD (99 aa)). Position 369-375 (369-375 (HPFSIFP)) interacts with FAD. Residue 411–414 (GPYG) coordinates NADP(+). The tract at residues 519–543 (SDQSDLAKREKDTEFGQDDTESNST) is disordered. The span at 523 to 532 (DLAKREKDTE) shows a compositional bias: basic and acidic residues. Residue 578–579 (CF) participates in NADP(+) binding.

Belongs to the ferric reductase (FRE) family. FAD serves as cofactor.

The protein resides in the cell membrane. The catalysed reaction is 2 a Fe(II)-siderophore + NADP(+) + H(+) = 2 a Fe(III)-siderophore + NADPH. In terms of biological role, cell surface metalloreductase. May be involved in copper homeostasis. The polypeptide is Ferric/cupric reductase transmembrane component 7 (FRE7) (Saccharomyces cerevisiae (strain ATCC 204508 / S288c) (Baker's yeast)).